A 227-amino-acid chain; its full sequence is UPF0173 metal-dependent hydrolase BCQ_4418 (227 aa).

This sequence belongs to the UPF0173 family.

The polypeptide is UPF0173 metal-dependent hydrolase BCQ_4418 (Bacillus cereus (strain Q1)).